We begin with the raw amino-acid sequence, 114 residues long: Hydrogenase maturation factor HypA (114 aa).

Residue H2 coordinates Ni(2+). Zn(2+)-binding residues include C73, C76, C89, and C92.

Belongs to the HypA/HybF family.

Involved in the maturation of [NiFe] hydrogenases. Required for nickel insertion into the metal center of the hydrogenase. In Psychromonas ingrahamii (strain DSM 17664 / CCUG 51855 / 37), this protein is Hydrogenase maturation factor HypA.